The chain runs to 1890 residues: Proteasome-associated protein ECM29 homolog (1890 aa).

HEAT repeat units follow at residues 6-29 (NAEI…EKLE), 30-67 (AAVG…RLSS), 130-167 (DKLF…ICAN), 226-263 (FSDL…MLDF), 294-330 (RVRQ…TNTN), 334-354 (KVLA…ELVS), 355-395 (KVSK…SFPQ), 459-496 (GQQH…EYYA), 498-523 (ARYL…LYGT), 524-561 (SKKD…EQRR), 565-602 (PSFQ…SLEV), 685-722 (AKQL…FGLS), 776-813 (PQFV…AVEI), 843-882 (STKL…GDGE), 938-975 (DDFD…HCSQ), 980-1018 (LAKK…ISDS), 1118-1155 (PYLG…DSKE), and 1159-1196 (RYYW…RPNG). Phosphoserine is present on serine 1213. 8 HEAT repeats span residues 1271 to 1309 (AVAS…SSGS), 1313 to 1350 (PHLA…AQEA), 1378 to 1415 (SVLE…IRLG), 1416 to 1457 (KEMT…LAKE), 1497 to 1534 (DYMD…DVSP), 1541 to 1578 (LNLN…RLSS), 1583 to 1620 (PDRL…GLDR), and 1623 to 1660 (QICS…QLEA). Residues 1680-1702 (RKESDDEDEPNTSQELSADERNK) form a disordered region. Serine 1683 is subject to Phosphoserine. Position 1691 is a phosphothreonine (threonine 1691). Serine 1692 carries the post-translational modification Phosphoserine. HEAT repeat units follow at residues 1751–1788 (PVQV…EKKI) and 1826–1863 (KEAL…NLEK).

In terms of assembly, associated with the proteasome.

The protein resides in the cytoplasm. In Drosophila melanogaster (Fruit fly), this protein is Proteasome-associated protein ECM29 homolog.